The primary structure comprises 544 residues: MAKRIIYNEQARRALERGIDILAESVAVTLGPKGRNVVLEKKFGAPQIINDGVTIAKEIELEDHIENTGVALIRQAASKTNDAAGDGTTTATVLAHAMVKAGLRNVAAGANAITLKKGIDKATEFLVGKIEENSKPISDSTAIAQCGTIAAGNDEEVGEMIANAMDKVGKEGVISLEEGKSMTTELEVTEGMRFDKGYISPYFATDTERMEAVLDEPYILLTDKKIALVQDLVPVLEQIAKTGKPLVIIAEDIEKEALATLVVNRLRGVLNVAAVKAPGFGDRRKAMLEDMAVLTNGQLITEDAGLKLENATLEMLGTGRRITINKETTTIVAEGNEKAVNSRCDQIKKQMEETDSSYDKEKLQERLAKLAGGVAVIKVGAATETEMKDKKLRLEDAINATKAAVEEGIVPGGGTTLAHLAPILKEWADATLSGEELIGANIVEASLTAPLMRIAENAGSNGAVIAENVKSKPFNDGFNAATGEYVDMSSAGIVDPAKVTRSGLQNAASIAGMVLTTECIVADMPEKKESAPAGAPGMGGDFDY.

ATP-binding positions include 29-32, 86-90, Gly-413, 479-481, and Asp-495; these read TLGP, DGTTT, and NAA.

This sequence belongs to the chaperonin (HSP60) family. In terms of assembly, forms a cylinder of 14 subunits composed of two heptameric rings stacked back-to-back. Interacts with the co-chaperonin GroES.

The protein resides in the cytoplasm. The catalysed reaction is ATP + H2O + a folded polypeptide = ADP + phosphate + an unfolded polypeptide.. Together with its co-chaperonin GroES, plays an essential role in assisting protein folding. The GroEL-GroES system forms a nano-cage that allows encapsulation of the non-native substrate proteins and provides a physical environment optimized to promote and accelerate protein folding. This chain is Chaperonin GroEL 2, found in Prochlorococcus marinus (strain MIT 9515).